Here is a 572-residue protein sequence, read N- to C-terminus: Proline--tRNA ligase (572 aa).

It belongs to the class-II aminoacyl-tRNA synthetase family. ProS type 1 subfamily. In terms of assembly, homodimer.

The protein localises to the cytoplasm. The catalysed reaction is tRNA(Pro) + L-proline + ATP = L-prolyl-tRNA(Pro) + AMP + diphosphate. Functionally, catalyzes the attachment of proline to tRNA(Pro) in a two-step reaction: proline is first activated by ATP to form Pro-AMP and then transferred to the acceptor end of tRNA(Pro). As ProRS can inadvertently accommodate and process non-cognate amino acids such as alanine and cysteine, to avoid such errors it has two additional distinct editing activities against alanine. One activity is designated as 'pretransfer' editing and involves the tRNA(Pro)-independent hydrolysis of activated Ala-AMP. The other activity is designated 'posttransfer' editing and involves deacylation of mischarged Ala-tRNA(Pro). The misacylated Cys-tRNA(Pro) is not edited by ProRS. In Citrobacter koseri (strain ATCC BAA-895 / CDC 4225-83 / SGSC4696), this protein is Proline--tRNA ligase.